We begin with the raw amino-acid sequence, 147 residues long: UPF0306 protein YhbP (147 aa).

The protein belongs to the UPF0306 family.

This is UPF0306 protein YhbP from Escherichia coli O157:H7 (strain EC4115 / EHEC).